The chain runs to 175 residues: MWSFARYTQKFCLRNLQLKNFSNKVKVSSLLFCSPNVRNISNWQCKRFTQSDAKDLASGVPSVKSDADQLQPKPTYNVSFTCTVCNTRSNHNFSKQAYHNGTVLVQCPKCKNRHLMADHLKIFSEERVTIEDILAKKGETFKKGYGQVINGNVVEFKPPQFKIRPAKSSSSNSSK.

A DNL-type zinc finger spans residues 71–166 (QPKPTYNVSF…KPPQFKIRPA (96 aa)). Zn(2+) is bound by residues Cys-82, Cys-85, Cys-107, and Cys-110.

This is an uncharacterized protein from Schizosaccharomyces pombe (strain 972 / ATCC 24843) (Fission yeast).